Reading from the N-terminus, the 214-residue chain is 3-demethoxyubiquinol 3-hydroxylase (214 aa).

Residues glutamate 63, glutamate 93, histidine 96, glutamate 145, glutamate 177, and histidine 180 each coordinate Fe cation.

The protein belongs to the COQ7 family. Fe cation is required as a cofactor.

It is found in the cell membrane. It catalyses the reaction a 5-methoxy-2-methyl-3-(all-trans-polyprenyl)benzene-1,4-diol + AH2 + O2 = a 3-demethylubiquinol + A + H2O. It participates in cofactor biosynthesis; ubiquinone biosynthesis. Its function is as follows. Catalyzes the hydroxylation of 2-nonaprenyl-3-methyl-6-methoxy-1,4-benzoquinol during ubiquinone biosynthesis. The chain is 3-demethoxyubiquinol 3-hydroxylase from Psychrobacter arcticus (strain DSM 17307 / VKM B-2377 / 273-4).